The primary structure comprises 235 residues: 2-C-methyl-D-erythritol 4-phosphate cytidylyltransferase (235 aa).

The protein belongs to the IspD/TarI cytidylyltransferase family. IspD subfamily.

The catalysed reaction is 2-C-methyl-D-erythritol 4-phosphate + CTP + H(+) = 4-CDP-2-C-methyl-D-erythritol + diphosphate. It participates in isoprenoid biosynthesis; isopentenyl diphosphate biosynthesis via DXP pathway; isopentenyl diphosphate from 1-deoxy-D-xylulose 5-phosphate: step 2/6. In terms of biological role, catalyzes the formation of 4-diphosphocytidyl-2-C-methyl-D-erythritol from CTP and 2-C-methyl-D-erythritol 4-phosphate (MEP). The polypeptide is 2-C-methyl-D-erythritol 4-phosphate cytidylyltransferase (Ectopseudomonas mendocina (strain ymp) (Pseudomonas mendocina)).